Consider the following 461-residue polypeptide: Siroheme synthase (461 aa).

The tract at residues 1–204 (MDYFPIFCQL…GDTTQAQQQV (204 aa)) is precorrin-2 dehydrogenase /sirohydrochlorin ferrochelatase. NAD(+) is bound by residues 22-23 (EV) and 43-44 (GR). Phosphoserine is present on Ser128. Positions 216-461 (GEVTLVGAGP…NWFRCEAASA (246 aa)) are uroporphyrinogen-III C-methyltransferase. Pro225 provides a ligand contact to S-adenosyl-L-methionine. Catalysis depends on Asp248, which acts as the Proton acceptor. Lys270 (proton donor) is an active-site residue. S-adenosyl-L-methionine contacts are provided by residues 301-303 (GGD), Ile306, 331-332 (TA), Met382, and Gly411.

The protein in the N-terminal section; belongs to the precorrin-2 dehydrogenase / sirohydrochlorin ferrochelatase family. It in the C-terminal section; belongs to the precorrin methyltransferase family.

It catalyses the reaction uroporphyrinogen III + 2 S-adenosyl-L-methionine = precorrin-2 + 2 S-adenosyl-L-homocysteine + H(+). It carries out the reaction precorrin-2 + NAD(+) = sirohydrochlorin + NADH + 2 H(+). The catalysed reaction is siroheme + 2 H(+) = sirohydrochlorin + Fe(2+). It participates in cofactor biosynthesis; adenosylcobalamin biosynthesis; precorrin-2 from uroporphyrinogen III: step 1/1. The protein operates within cofactor biosynthesis; adenosylcobalamin biosynthesis; sirohydrochlorin from precorrin-2: step 1/1. Its pathway is porphyrin-containing compound metabolism; siroheme biosynthesis; precorrin-2 from uroporphyrinogen III: step 1/1. It functions in the pathway porphyrin-containing compound metabolism; siroheme biosynthesis; siroheme from sirohydrochlorin: step 1/1. It participates in porphyrin-containing compound metabolism; siroheme biosynthesis; sirohydrochlorin from precorrin-2: step 1/1. Functionally, multifunctional enzyme that catalyzes the SAM-dependent methylations of uroporphyrinogen III at position C-2 and C-7 to form precorrin-2 via precorrin-1. Then it catalyzes the NAD-dependent ring dehydrogenation of precorrin-2 to yield sirohydrochlorin. Finally, it catalyzes the ferrochelation of sirohydrochlorin to yield siroheme. This Edwardsiella ictaluri (strain 93-146) protein is Siroheme synthase.